Here is a 358-residue protein sequence, read N- to C-terminus: Photosystem II protein D1 2 (358 aa).

Transmembrane regions (helical) follow at residues 28 to 45, 117 to 132, and 141 to 155; these read YVGW…AATI, HFLI…QWEL, and WICV…AAMA. Residue His-117 participates in chlorophyll a binding. Tyr-125 lines the pheophytin a pocket. Positions 169 and 188 each coordinate [CaMn4O5] cluster. The helical transmembrane segment at 196–217 threads the bilayer; the sequence is FHMLGVAGVFGGSLFSAMHGSL. Residue His-197 coordinates chlorophyll a. Residues His-214 and 263–264 contribute to the a quinone site; that span reads SF. Residue His-214 coordinates Fe cation. His-271 contributes to the Fe cation binding site. Residues 273-287 form a helical membrane-spanning segment; that stretch reads FLGAWPVVGIWFTSM. [CaMn4O5] cluster contacts are provided by His-331, Glu-332, Asp-341, and Ala-343. A propeptide spanning residues 344–358 is cleaved from the precursor; sequence TVESTPVALQAPAIG.

Belongs to the reaction center PufL/M/PsbA/D family. As to quaternary structure, PSII is composed of 1 copy each of membrane proteins PsbA, PsbB, PsbC, PsbD, PsbE, PsbF, PsbH, PsbI, PsbJ, PsbK, PsbL, PsbM, PsbT, PsbX, PsbY, PsbZ, Psb30/Ycf12, peripheral proteins PsbO, CyanoQ (PsbQ), PsbU, PsbV and a large number of cofactors. It forms dimeric complexes. The D1/D2 heterodimer binds P680, chlorophylls that are the primary electron donor of PSII, and subsequent electron acceptors. It shares a non-heme iron and each subunit binds pheophytin, quinone, additional chlorophylls, carotenoids and lipids. D1 provides most of the ligands for the Mn4-Ca-O5 cluster of the oxygen-evolving complex (OEC). There is also a Cl(-1) ion associated with D1 and D2, which is required for oxygen evolution. The PSII complex binds additional chlorophylls, carotenoids and specific lipids. is required as a cofactor. Post-translationally, tyr-160 forms a radical intermediate that is referred to as redox-active TyrZ, YZ or Y-Z. In terms of processing, C-terminally processed by CtpA; processing is essential to allow assembly of the oxygen-evolving complex and thus photosynthetic growth.

The protein resides in the cellular thylakoid membrane. It carries out the reaction 2 a plastoquinone + 4 hnu + 2 H2O = 2 a plastoquinol + O2. Its function is as follows. Photosystem II (PSII) is a light-driven water:plastoquinone oxidoreductase that uses light energy to abstract electrons from H(2)O, generating O(2) and a proton gradient subsequently used for ATP formation. It consists of a core antenna complex that captures photons, and an electron transfer chain that converts photonic excitation into a charge separation. The D1/D2 (PsbA/PsbD) reaction center heterodimer binds P680, the primary electron donor of PSII as well as several subsequent electron acceptors. The sequence is that of Photosystem II protein D1 2 from Parasynechococcus marenigrum (strain WH8102).